Consider the following 294-residue polypeptide: UDP-3-O-acyl-N-acetylglucosamine deacetylase (294 aa).

The Zn(2+) site is built by histidine 75, histidine 232, and aspartate 236. Histidine 259 acts as the Proton donor in catalysis.

Belongs to the LpxC family. Zn(2+) is required as a cofactor.

It carries out the reaction a UDP-3-O-[(3R)-3-hydroxyacyl]-N-acetyl-alpha-D-glucosamine + H2O = a UDP-3-O-[(3R)-3-hydroxyacyl]-alpha-D-glucosamine + acetate. It participates in glycolipid biosynthesis; lipid IV(A) biosynthesis; lipid IV(A) from (3R)-3-hydroxytetradecanoyl-[acyl-carrier-protein] and UDP-N-acetyl-alpha-D-glucosamine: step 2/6. Catalyzes the hydrolysis of UDP-3-O-myristoyl-N-acetylglucosamine to form UDP-3-O-myristoylglucosamine and acetate, the committed step in lipid A biosynthesis. The chain is UDP-3-O-acyl-N-acetylglucosamine deacetylase from Campylobacter jejuni subsp. doylei (strain ATCC BAA-1458 / RM4099 / 269.97).